The sequence spans 749 residues: 1,4-alpha-glucan branching enzyme GlgB (749 aa).

The active-site Nucleophile is the Asp-427. The Proton donor role is filled by Glu-480.

Belongs to the glycosyl hydrolase 13 family. GlgB subfamily. Monomer.

It carries out the reaction Transfers a segment of a (1-&gt;4)-alpha-D-glucan chain to a primary hydroxy group in a similar glucan chain.. The protein operates within glycan biosynthesis; glycogen biosynthesis. Its function is as follows. Catalyzes the formation of the alpha-1,6-glucosidic linkages in glycogen by scission of a 1,4-alpha-linked oligosaccharide from growing alpha-1,4-glucan chains and the subsequent attachment of the oligosaccharide to the alpha-1,6 position. This is 1,4-alpha-glucan branching enzyme GlgB from Thermobifida fusca (strain YX).